The primary structure comprises 80 residues: D-alanyl carrier protein 2 (80 aa).

One can recognise a Carrier domain in the interval 1–80 (MIMDDVKATV…KIVAKVASLQ (80 aa)). S38 bears the O-(pantetheine 4'-phosphoryl)serine mark.

It belongs to the DltC family. Post-translationally, 4'-phosphopantetheine is transferred from CoA to a specific serine of apo-DCP.

The protein localises to the cytoplasm. It participates in cell wall biogenesis; lipoteichoic acid biosynthesis. Functionally, carrier protein involved in the D-alanylation of lipoteichoic acid (LTA). The loading of thioester-linked D-alanine onto DltC is catalyzed by D-alanine--D-alanyl carrier protein ligase DltA. The DltC-carried D-alanyl group is further transferred to cell membrane phosphatidylglycerol (PG) by forming an ester bond, probably catalyzed by DltD. D-alanylation of LTA plays an important role in modulating the properties of the cell wall in Gram-positive bacteria, influencing the net charge of the cell wall. This Lactiplantibacillus plantarum (strain ATCC BAA-793 / NCIMB 8826 / WCFS1) (Lactobacillus plantarum) protein is D-alanyl carrier protein 2.